A 134-amino-acid chain; its full sequence is Large ribosomal subunit protein uL22 (134 aa).

It belongs to the universal ribosomal protein uL22 family. As to quaternary structure, part of the 50S ribosomal subunit.

This protein binds specifically to 23S rRNA; its binding is stimulated by other ribosomal proteins, e.g. L4, L17, and L20. It is important during the early stages of 50S assembly. It makes multiple contacts with different domains of the 23S rRNA in the assembled 50S subunit and ribosome. In terms of biological role, the globular domain of the protein is located near the polypeptide exit tunnel on the outside of the subunit, while an extended beta-hairpin is found that lines the wall of the exit tunnel in the center of the 70S ribosome. The protein is Large ribosomal subunit protein uL22 of Porphyromonas gingivalis (strain ATCC 33277 / DSM 20709 / CIP 103683 / JCM 12257 / NCTC 11834 / 2561).